The following is a 222-amino-acid chain: Charged multivesicular body protein 3 (222 aa).

G2 carries the N-myristoyl glycine lipid modification. An intramolecular interaction with C-terminus region spans residues G2–A113. The stretch at K22–K54 forms a coiled coil. Important for autoinhibitory function regions lie at residues V59 to A64 and I168 to L169. A coiled-coil region spans residues E141 to S222. The interval M151–L220 is intramolecular interaction with N-terminus. Positions M151–S222 are interaction with VPS4A. A Glycyl lysine isopeptide (Lys-Gly) (interchain with G-Cter in ubiquitin) cross-link involves residue K179. Residues A180–S222 form a disordered region. S200 is subject to Phosphoserine. Acidic residues predominate over residues S200–L210. Positions E201–E211 match the MIT-interacting motif motif. Interaction with STAMBP regions lie at residues E203–E207 and R221–S222.

This sequence belongs to the SNF7 family. In terms of assembly, probable core component of the endosomal sorting required for transport complex III (ESCRT-III). ESCRT-III components are thought to multimerize to form a flat lattice on the perimeter membrane of the endosome. Several assembly forms of ESCRT-III may exist that interact and act sequentially. Forms a metastable monomer in solution; its core structure (without part of the putative autoinhibitory C-terminal acidic region) oligomerizes into a flat lattice via two different dimerization interfaces. In vitro, heteromerizes with CHMP2A (but not CHMP4) to form helical tubular structures that expose membrane-interacting sites on the outside whereas VPS4B can associate on the inside of the tubule. May interact with IGFBP7; the relevance of such interaction however remains unclear. Interacts with CHMP2A. Interacts with CHMP4A; the interaction requires the release of CHMP4A autoinhibition. Interacts with VPS4A. Interacts with STAMBP; the interaction appears to relieve the autoinhibition of CHMP3. Interacts with VTA1. In terms of tissue distribution, widely expressed. Expressed in heart, brain, placenta, lung, liver, skeletal muscle, kidney and pancreas.

Its subcellular location is the cytoplasm. The protein resides in the cytosol. It localises to the membrane. It is found in the endosome. The protein localises to the late endosome membrane. Functionally, probable core component of the endosomal sorting required for transport complex III (ESCRT-III) which is involved in multivesicular bodies (MVBs) formation and sorting of endosomal cargo proteins into MVBs. MVBs contain intraluminal vesicles (ILVs) that are generated by invagination and scission from the limiting membrane of the endosome and mostly are delivered to lysosomes enabling degradation of membrane proteins, such as stimulated growth factor receptors, lysosomal enzymes and lipids. The MVB pathway appears to require the sequential function of ESCRT-O, -I,-II and -III complexes. ESCRT-III proteins mostly dissociate from the invaginating membrane before the ILV is released. The ESCRT machinery also functions in topologically equivalent membrane fission events, such as the terminal stages of cytokinesis and the budding of enveloped viruses (HIV-1 and other lentiviruses). ESCRT-III proteins are believed to mediate the necessary vesicle extrusion and/or membrane fission activities, possibly in conjunction with the AAA ATPase VPS4. Selectively binds to phosphatidylinositol 3,5-bisphosphate PtdIns(3,5)P2 and PtdIns(3,4)P2 in preference to other phosphoinositides tested. Involved in late stages of cytokinesis. Plays a role in endosomal sorting/trafficking of EGF receptor. Isoform 2 prevents stress-mediated cell death and accumulation of reactive oxygen species when expressed in yeast cells. The chain is Charged multivesicular body protein 3 (CHMP3) from Homo sapiens (Human).